Consider the following 93-residue polypeptide: Large ribosomal subunit protein bL27 (93 aa).

A disordered region spans residues 1-22 (MAHKKAGGSSRNGRDSEGRRLG).

This sequence belongs to the bacterial ribosomal protein bL27 family.

The sequence is that of Large ribosomal subunit protein bL27 from Methylobacterium sp. (strain 4-46).